We begin with the raw amino-acid sequence, 541 residues long: Eukaryotic translation initiation factor 3 subunit L (541 aa).

In terms of domain architecture, PCI spans 308–516 (TFSDILLYIQ…IHIADTKVSH (209 aa)).

It belongs to the eIF-3 subunit L family. Component of the eukaryotic translation initiation factor 3 (eIF-3) complex. The eIF-3 complex interacts with pix.

It localises to the cytoplasm. Its function is as follows. Component of the eukaryotic translation initiation factor 3 (eIF-3) complex, which is involved in protein synthesis of a specialized repertoire of mRNAs and, together with other initiation factors, stimulates binding of mRNA and methionyl-tRNAi to the 40S ribosome. The eIF-3 complex specifically targets and initiates translation of a subset of mRNAs involved in cell proliferation. The protein is Eukaryotic translation initiation factor 3 subunit L of Drosophila pseudoobscura pseudoobscura (Fruit fly).